The chain runs to 282 residues: MAVRLSLPAPAKLNLFLHILGRRADGYHELQTLFQFLDHGDELHFETREDGQVRLHTEIAGVPHDGNLIVRAARVLQEASGSTQGVDIWLDKRLPMGGGIGGGSSDAATTLLALNHLWNLGWDEDRIAALGLRLGADVPVFTRGRAAFAEGVGEKLTPVDIPEPWYLVVVPQVLVSTAEIFSDPLLTRDSPAIKVRTVLEGDSRNDCQPVVERRYPEVRNALILLNKFVSARLTGTGGCVFGSFPNKAEADKVSALLPDHLQRFVAKGSNVSMLHRKLETLV.

Lysine 12 is a catalytic residue. An ATP-binding site is contributed by 95-105; the sequence is PMGGGIGGGSS. Residue aspartate 137 is part of the active site.

The protein belongs to the GHMP kinase family. IspE subfamily.

It carries out the reaction 4-CDP-2-C-methyl-D-erythritol + ATP = 4-CDP-2-C-methyl-D-erythritol 2-phosphate + ADP + H(+). The protein operates within isoprenoid biosynthesis; isopentenyl diphosphate biosynthesis via DXP pathway; isopentenyl diphosphate from 1-deoxy-D-xylulose 5-phosphate: step 3/6. Functionally, catalyzes the phosphorylation of the position 2 hydroxy group of 4-diphosphocytidyl-2C-methyl-D-erythritol. This chain is 4-diphosphocytidyl-2-C-methyl-D-erythritol kinase, found in Pseudomonas paraeruginosa (strain DSM 24068 / PA7) (Pseudomonas aeruginosa (strain PA7)).